The following is a 105-amino-acid chain: Immunoglobulin lambda-like polypeptide 1 (105 aa).

Residues 1–105 (QPKSDPLVTL…EKSVSPAECS (105 aa)) are c region. One can recognise an Ig-like C1-type domain in the interval 6–100 (PLVTLFLPSL…EGNTVEKSVS (95 aa)). Cys27 and Cys86 are disulfide-bonded.

In terms of assembly, associates non-covalently with VPREB1A. Interacts with SYNV1/HRD1 (via N-terminus); this interaction leads to increased IGLL1 ubiquitination and degradation in pre-B cells, possibly through a lysosomal, not proteasomal, pathway.

It is found in the endoplasmic reticulum. The protein localises to the secreted. In terms of biological role, critical for B-cell development. This Mus spretus (Western Mediterranean mouse) protein is Immunoglobulin lambda-like polypeptide 1 (Igll1).